A 122-amino-acid polypeptide reads, in one-letter code: Small ribosomal subunit protein uS13 (122 aa).

The interval 99–122 is disordered; that stretch reads RGQRTHTNARTRKGPAKAIAGKKK.

This sequence belongs to the universal ribosomal protein uS13 family. Part of the 30S ribosomal subunit. Forms a loose heterodimer with protein S19. Forms two bridges to the 50S subunit in the 70S ribosome.

Located at the top of the head of the 30S subunit, it contacts several helices of the 16S rRNA. In the 70S ribosome it contacts the 23S rRNA (bridge B1a) and protein L5 of the 50S subunit (bridge B1b), connecting the 2 subunits; these bridges are implicated in subunit movement. Contacts the tRNAs in the A and P-sites. The polypeptide is Small ribosomal subunit protein uS13 (Rhizobium meliloti (strain 1021) (Ensifer meliloti)).